A 173-amino-acid polypeptide reads, in one-letter code: Protein-export protein SecB 1 (173 aa).

This sequence belongs to the SecB family. In terms of assembly, homotetramer, a dimer of dimers. One homotetramer interacts with 1 SecA dimer.

The protein localises to the cytoplasm. In terms of biological role, one of the proteins required for the normal export of preproteins out of the cell cytoplasm. It is a molecular chaperone that binds to a subset of precursor proteins, maintaining them in a translocation-competent state. It also specifically binds to its receptor SecA. The protein is Protein-export protein SecB 1 of Gluconobacter oxydans (strain 621H) (Gluconobacter suboxydans).